A 48-amino-acid polypeptide reads, in one-letter code: Large ribosomal subunit protein bL32 (48 aa).

Positions 1–20 (MAVPKRRVSKTRAAKRRTHY) are enriched in basic residues. The interval 1–48 (MAVPKRRVSKTRAAKRRTHYKVSLPMPIKDKDGSYKMPHRANPTTKEY) is disordered.

Belongs to the bacterial ribosomal protein bL32 family.

This chain is Large ribosomal subunit protein bL32 (rpmF), found in Campylobacter jejuni subsp. jejuni serotype O:2 (strain ATCC 700819 / NCTC 11168).